A 177-amino-acid polypeptide reads, in one-letter code: Peptidyl-prolyl cis-trans isomerase H (177 aa).

N-acetylalanine is present on Ala-2. A PPIase cyclophilin-type domain is found at 14 to 176; that stretch reads FFDVSIGGQE…LPVVISQCGE (163 aa).

It belongs to the cyclophilin-type PPIase family. PPIase H subfamily. In terms of assembly, interacts directly with PRPF4. Part of a heteromeric complex containing PPIH, PRPF3 and PRPF4 that is stable in the absence of RNA. Component of the U4/U6-U5 tri-snRNP complex composed of the U4, U6 and U5 snRNAs and at least PRPF3, PRPF4, PRPF6, PRPF8, PRPF31, SNRNP200, TXNL4A, SNRNP40, DDX23, CD2BP2, PPIH, SNU13, EFTUD2, SART1 and USP39. Heterodimer with PRPF18.

The protein resides in the nucleus speckle. It is found in the cytoplasm. It carries out the reaction [protein]-peptidylproline (omega=180) = [protein]-peptidylproline (omega=0). Inhibited by cyclosporin A. PPIase that catalyzes the cis-trans isomerization of proline imidic peptide bonds in oligopeptides and may therefore assist protein folding. Participates in pre-mRNA splicing. May play a role in the assembly of the U4/U5/U6 tri-snRNP complex, one of the building blocks of the spliceosome. May act as a chaperone. This Homo sapiens (Human) protein is Peptidyl-prolyl cis-trans isomerase H (PPIH).